Here is a 154-residue protein sequence, read N- to C-terminus: 6,7-dimethyl-8-ribityllumazine synthase (154 aa).

5-amino-6-(D-ribitylamino)uracil-binding positions include Phe22, 56-58, and 80-82; these read AFE and AVI. A (2S)-2-hydroxy-3-oxobutyl phosphate-binding site is contributed by 85–86; sequence AT. His88 (proton donor) is an active-site residue. Residue Phe113 participates in 5-amino-6-(D-ribitylamino)uracil binding. Arg127 is a binding site for (2S)-2-hydroxy-3-oxobutyl phosphate.

The protein belongs to the DMRL synthase family.

The catalysed reaction is (2S)-2-hydroxy-3-oxobutyl phosphate + 5-amino-6-(D-ribitylamino)uracil = 6,7-dimethyl-8-(1-D-ribityl)lumazine + phosphate + 2 H2O + H(+). It participates in cofactor biosynthesis; riboflavin biosynthesis; riboflavin from 2-hydroxy-3-oxobutyl phosphate and 5-amino-6-(D-ribitylamino)uracil: step 1/2. Functionally, catalyzes the formation of 6,7-dimethyl-8-ribityllumazine by condensation of 5-amino-6-(D-ribitylamino)uracil with 3,4-dihydroxy-2-butanone 4-phosphate. This is the penultimate step in the biosynthesis of riboflavin. This is 6,7-dimethyl-8-ribityllumazine synthase from Desulfitobacterium hafniense (strain DSM 10664 / DCB-2).